A 702-amino-acid chain; its full sequence is Cell adhesion molecule CEACAM5 (702 aa).

The first 34 residues, 1 to 34 (MESPSAPPHRWCIPWQRLLLTASLLTFWNPPTTA), serve as a signal peptide directing secretion. The Ig-like V-type domain occupies 35–144 (KLTIESTPFN…TGQFRVYPEL (110 aa)). Residues N104, N115, N152, N182, N197, N204, N208, N246, N256, N274, N288, N292, N309, N330, N351, N360, N375, N432, N466, N480, N508, N529, N553, N560, N580, N612, N650, and N665 are each glycosylated (N-linked (GlcNAc...) asparagine). Ig-like C2-type domains lie at 145 to 232 (PKPS…VILN), 240 to 315 (PTIS…TVTT), 323 to 410 (PKPF…VILN), 418 to 495 (PTIS…KTIT), 501 to 588 (PKPS…VTLD), and 593 to 675 (PDTP…ITVS). C167 and C215 are oxidised to a cystine. An intrachain disulfide couples C259 to C299. A disulfide bridge links C345 with C393. C437 and C477 are oxidised to a cystine. C523 and C571 are disulfide-bonded. C615 and C655 are oxidised to a cystine. A685 carries the GPI-anchor amidated alanine lipid modification. Residues 686-702 (GATVGIMIGVLVGVALI) constitute a propeptide, removed in mature form.

This sequence belongs to the immunoglobulin superfamily. CEA family. In terms of assembly, homodimer. In terms of processing, complex immunoreactive glycoprotein with a MW of 180 kDa comprising 60% carbohydrate. In terms of tissue distribution, expressed in columnar epithelial and goblet cells of the colon (at protein level). Found in adenocarcinomas of endodermally derived digestive system epithelium and fetal colon.

It is found in the cell membrane. It localises to the apical cell membrane. The protein resides in the cell surface. Functionally, cell surface glycoprotein that plays a role in cell adhesion, intracellular signaling and tumor progression. Mediates homophilic and heterophilic cell adhesion with other carcinoembryonic antigen-related cell adhesion molecules, such as CEACAM6. Plays a role as an oncogene by promoting tumor progression; induces resistance to anoikis of colorectal carcinoma cells. Its function is as follows. (Microbial infection) Receptor for E.coli Dr adhesins. Binding of E.coli Dr adhesins leads to dissociation of the homodimer. The protein is Cell adhesion molecule CEACAM5 of Homo sapiens (Human).